The chain runs to 175 residues: COMPASS component SDC1 (175 aa).

The segment covering 1-12 has biased composition (polar residues); it reads MNESENSPQHNE. The interval 1–45 is disordered; it reads MNESENSPQHNEVTVPMVEDTSSNADIPMEQIQREDNKNYDKHDN. Residues 32–45 show a composition bias toward basic and acidic residues; sequence IQREDNKNYDKHDN. The tract at residues 121–162 is DPY-30; sequence QTRKYLNTNVTPHLLAGMRLIAVQQPEDPLRVLGEYLIEQSN.

This sequence belongs to the dpy-30 family. Component of the Set1C/COMPASS complex which consists of SET1(2), BRE2(2), SPP1(2), SDC1(1), SHG1(1), SWD1(1), SWD2(1), and SWD3(1). Interacts directly with BRE2.

The protein resides in the nucleus. Functionally, component of the Set1C/COMPASS complex that specifically mono-, di- and trimethylates histone H3 to form H3K4me1/2/3, which subsequently plays a role in telomere length maintenance and transcription elongation regulation. COMPASS recognizes ubiquitinated H2B on one face of the nucleosome which stimulates the methylation of H3 on the opposing face. This is COMPASS component SDC1 from Saccharomyces cerevisiae (strain ATCC 204508 / S288c) (Baker's yeast).